The sequence spans 216 residues: PRA1 family protein B6 (216 aa).

Ala-2 carries the N-acetylalanine modification. 5 helical membrane-spanning segments follow: residues 83-103, 105-125, 135-155, 159-179, and 186-206; these read LVAI…FLLA, LAAS…LVIG, LGIL…GSLL, LAVG…EDLF, and IGSG…AAAI.

The protein belongs to the PRA1 family. In terms of assembly, interacts with PRA1B1, PRA1B2, PRA1B3, PRA1B4, PRA1B5 and PRA1E. Expressed in hypocotyls, roots, lateral roots, lateral root caps, columella cells, leaves and stomata.

It is found in the endoplasmic reticulum membrane. Its function is as follows. May be involved in both secretory and endocytic intracellular trafficking in the endosomal/prevacuolar compartments. In Arabidopsis thaliana (Mouse-ear cress), this protein is PRA1 family protein B6 (PRA1B6).